The primary structure comprises 353 residues: Photosystem II protein D1 (353 aa).

Thr-2 is modified (N-acetylthreonine). The residue at position 2 (Thr-2) is a Phosphothreonine. 3 consecutive transmembrane segments (helical) span residues 29 to 46 (YIGW…TATS), 118 to 133 (HFLL…EWEL), and 142 to 156 (WIAV…AATA). Chlorophyll a is bound at residue His-118. Tyr-126 contacts pheophytin a. 2 residues coordinate [CaMn4O5] cluster: Asp-170 and Glu-189. The helical transmembrane segment at 197-218 (FHMLGVAGVFGGSLFSAMHGSL) threads the bilayer. His-198 is a chlorophyll a binding site. Residues His-215 and 264 to 265 (SF) contribute to the a quinone site. A Fe cation-binding site is contributed by His-215. Residue His-272 coordinates Fe cation. A helical transmembrane segment spans residues 274-288 (FLAAWPVVGIWFTAL). Residues His-332, Glu-333, Asp-342, and Ala-344 each coordinate [CaMn4O5] cluster. Residues 345 to 353 (SVEAPSINA) constitute a propeptide that is removed on maturation.

It belongs to the reaction center PufL/M/PsbA/D family. In terms of assembly, PSII is composed of 1 copy each of membrane proteins PsbA, PsbB, PsbC, PsbD, PsbE, PsbF, PsbH, PsbI, PsbJ, PsbK, PsbL, PsbM, PsbT, PsbX, PsbY, PsbZ, Psb30/Ycf12, at least 3 peripheral proteins of the oxygen-evolving complex and a large number of cofactors. It forms dimeric complexes. The cofactor is The D1/D2 heterodimer binds P680, chlorophylls that are the primary electron donor of PSII, and subsequent electron acceptors. It shares a non-heme iron and each subunit binds pheophytin, quinone, additional chlorophylls, carotenoids and lipids. D1 provides most of the ligands for the Mn4-Ca-O5 cluster of the oxygen-evolving complex (OEC). There is also a Cl(-1) ion associated with D1 and D2, which is required for oxygen evolution. The PSII complex binds additional chlorophylls, carotenoids and specific lipids.. In terms of processing, tyr-161 forms a radical intermediate that is referred to as redox-active TyrZ, YZ or Y-Z. C-terminally processed by CTPA; processing is essential to allow assembly of the oxygen-evolving complex and thus photosynthetic growth.

It localises to the plastid. Its subcellular location is the chloroplast thylakoid membrane. It carries out the reaction 2 a plastoquinone + 4 hnu + 2 H2O = 2 a plastoquinol + O2. Functionally, photosystem II (PSII) is a light-driven water:plastoquinone oxidoreductase that uses light energy to abstract electrons from H(2)O, generating O(2) and a proton gradient subsequently used for ATP formation. It consists of a core antenna complex that captures photons, and an electron transfer chain that converts photonic excitation into a charge separation. The D1/D2 (PsbA/PsbD) reaction center heterodimer binds P680, the primary electron donor of PSII as well as several subsequent electron acceptors. The protein is Photosystem II protein D1 of Chara vulgaris (Common stonewort).